The chain runs to 235 residues: Small ribosomal subunit protein mS23 (235 aa).

Residues 51-71 form a disordered region; the sequence is PYPIQHTEPKDRGRAAQRPRN.

The protein belongs to the mitochondrion-specific ribosomal protein mS23 family. As to quaternary structure, component of the mitochondrial small ribosomal subunit.

The protein localises to the mitochondrion. This is Small ribosomal subunit protein mS23 (RSM25) from Chaetomium globosum (strain ATCC 6205 / CBS 148.51 / DSM 1962 / NBRC 6347 / NRRL 1970) (Soil fungus).